Reading from the N-terminus, the 366-residue chain is Protein disulfide isomerase-like 2-1 (366 aa).

Residues 1 to 29 (MATPQISRKALASLLLLVAAAAAVSTASA) form the signal peptide. Thioredoxin domains lie at 30–138 (DDVL…SEAA) and 139–257 (TNVK…EKCG). Residues cysteine 59, cysteine 62, cysteine 178, and cysteine 181 each act as nucleophile in the active site. 2 cysteine pairs are disulfide-bonded: cysteine 59/cysteine 62 and cysteine 178/cysteine 181.

The protein belongs to the protein disulfide isomerase family.

Its subcellular location is the secreted. The catalysed reaction is Catalyzes the rearrangement of -S-S- bonds in proteins.. Acts as a protein-folding catalyst that interacts with nascent polypeptides to catalyze the formation, isomerization, and reduction or oxidation of disulfide bonds. May play a role in storage protein biogenesis. The chain is Protein disulfide isomerase-like 2-1 (PDIL2-1) from Oryza sativa subsp. japonica (Rice).